A 38-amino-acid polypeptide reads, in one-letter code: uncharacterized protein (38 aa).

This sequence belongs to the asfivirus C84L family.

This is an uncharacterized protein from Ornithodoros (relapsing fever ticks).